The sequence spans 95 residues: Mitochondrial import inner membrane translocase subunit Tim13 (95 aa).

Residue M1 is modified to N-acetylmethionine. S7 carries the phosphoserine modification. Positions 46-69 (CFRKCIGKPGGSLDNSEQKCIAMC) match the Twin CX3C motif motif. Disulfide bonds link C46–C69 and C50–C65. Residue K53 is modified to N6-succinyllysine.

Belongs to the small Tim family. As to quaternary structure, heterohexamer; composed of 3 copies of TIMM8 (TIMM8A or TIMM8B) and 3 copies of TIMM13, named soluble 70 kDa complex. Associates with the TIM22 complex, whose core is composed of TIMM22. In terms of tissue distribution, present at high level in liver and brain, and at lower level in muscle and heart. In CNS sections, it is predominantly present in the soma and the dendritic portion of the Purkinje cells of the cerebellum, but not in the glial cells. Scattered expression also is also detected in the brain stem, olfactory bulb, substantia nigra, hippocampus and striatum (at protein level).

The protein localises to the mitochondrion inner membrane. In terms of biological role, mitochondrial intermembrane chaperone that participates in the import and insertion of some multi-pass transmembrane proteins into the mitochondrial inner membrane. Also required for the transfer of beta-barrel precursors from the TOM complex to the sorting and assembly machinery (SAM complex) of the outer membrane. Acts as a chaperone-like protein that protects the hydrophobic precursors from aggregation and guide them through the mitochondrial intermembrane space. The TIMM8-TIMM13 complex mediates the import of proteins such as TIMM23, SLC25A12/ARALAR1 and SLC25A13/ARALAR2, while the predominant TIMM9-TIMM10 70 kDa complex mediates the import of much more proteins. The protein is Mitochondrial import inner membrane translocase subunit Tim13 (Timm13) of Mus musculus (Mouse).